A 308-amino-acid polypeptide reads, in one-letter code: Oligopeptide transport ATP-binding protein AmiF (308 aa).

An ABC transporter domain is found at 6–251 (VEIKDLEISF…PIHPYTQALL (246 aa)). 42 to 49 (GESGSGKT) lines the ATP pocket.

Belongs to the ABC transporter superfamily.

Its subcellular location is the cell membrane. In terms of biological role, part of the binding-protein-dependent transport system for oligopeptides. Probably responsible for energy coupling to the transport system. The sequence is that of Oligopeptide transport ATP-binding protein AmiF (amiF) from Streptococcus pneumoniae serotype 4 (strain ATCC BAA-334 / TIGR4).